The primary structure comprises 159 residues: Ribosomal RNA large subunit methyltransferase H (159 aa).

S-adenosyl-L-methionine contacts are provided by residues Leu-76, Gly-108, and 127 to 132 (FSKMTF).

Belongs to the RNA methyltransferase RlmH family. In terms of assembly, homodimer.

Its subcellular location is the cytoplasm. The enzyme catalyses pseudouridine(1915) in 23S rRNA + S-adenosyl-L-methionine = N(3)-methylpseudouridine(1915) in 23S rRNA + S-adenosyl-L-homocysteine + H(+). Specifically methylates the pseudouridine at position 1915 (m3Psi1915) in 23S rRNA. This is Ribosomal RNA large subunit methyltransferase H from Exiguobacterium sibiricum (strain DSM 17290 / CCUG 55495 / CIP 109462 / JCM 13490 / 255-15).